The primary structure comprises 188 residues: Protein GrpE (188 aa).

The segment covering 1–22 (MEENKQNQNLNTEETTEQQTEA) has biased composition (low complexity). The segment at 1–26 (MEENKQNQNLNTEETTEQQTEAETVE) is disordered.

It belongs to the GrpE family. In terms of assembly, homodimer.

The protein resides in the cytoplasm. Functionally, participates actively in the response to hyperosmotic and heat shock by preventing the aggregation of stress-denatured proteins, in association with DnaK and GrpE. It is the nucleotide exchange factor for DnaK and may function as a thermosensor. Unfolded proteins bind initially to DnaJ; upon interaction with the DnaJ-bound protein, DnaK hydrolyzes its bound ATP, resulting in the formation of a stable complex. GrpE releases ADP from DnaK; ATP binding to DnaK triggers the release of the substrate protein, thus completing the reaction cycle. Several rounds of ATP-dependent interactions between DnaJ, DnaK and GrpE are required for fully efficient folding. The sequence is that of Protein GrpE from Exiguobacterium sibiricum (strain DSM 17290 / CCUG 55495 / CIP 109462 / JCM 13490 / 255-15).